Consider the following 435-residue polypeptide: IAA-amino acid hydrolase ILR1-like 5 (435 aa).

An N-terminal signal peptide occupies residues 1-25 (MSFCKLVSFVLILHLLNSCLISCSS). Residues C134, H136, E170, H194, and H397 each coordinate Mn(2+). Residues 432 to 435 (KDEL) carry the Prevents secretion from ER motif.

The protein belongs to the peptidase M20 family.

The protein localises to the endoplasmic reticulum lumen. Its function is as follows. Hydrolyzes certain amino acid conjugates of the plant growth regulator indole-3-acetic acid (IAA). The chain is IAA-amino acid hydrolase ILR1-like 5 from Arabidopsis thaliana (Mouse-ear cress).